Reading from the N-terminus, the 413-residue chain is Peptidase T (413 aa).

A Zn(2+)-binding site is contributed by His-81. Asp-83 is an active-site residue. A Zn(2+)-binding site is contributed by Asp-143. Glu-178 acts as the Proton acceptor in catalysis. 3 residues coordinate Zn(2+): Glu-179, Asp-201, and His-383.

Belongs to the peptidase M20B family. Requires Zn(2+) as cofactor.

Its subcellular location is the cytoplasm. The catalysed reaction is Release of the N-terminal residue from a tripeptide.. Cleaves the N-terminal amino acid of tripeptides. The chain is Peptidase T from Lactococcus lactis subsp. hordniae.